The following is a 161-amino-acid chain: Vasotocin-neurophysin VT (161 aa).

The first 19 residues, 1–19, serve as a signal peptide directing secretion; the sequence is MAEPSLPLSFLCLLALSSA. Cys20 and Cys25 are joined by a disulfide. Residue Gly28 is modified to Glycine amide. Cystine bridges form between Cys41–Cys85, Cys44–Cys58, Cys52–Cys75, Cys59–Cys65, Cys92–Cys104, Cys98–Cys116, and Cys105–Cys110.

It belongs to the vasopressin/oxytocin family. Seven disulfide bonds are present in neurophysin.

It is found in the secreted. In terms of biological role, vasotocin is an antidiuretic hormone. The protein is Vasotocin-neurophysin VT of Gallus gallus (Chicken).